A 619-amino-acid chain; its full sequence is Mitogen-activated protein kinase kinase kinase 2 (619 aa).

The tract at residues L25–R45 is disordered. Phosphoserine is present on S26. The region spanning D43–N122 is the PB1 domain. A phosphoserine mark is found at S153, S159, and S164. 3 disordered regions span residues I154 to E173, L201 to S248, and R289 to N355. A compositionally biased stretch (low complexity) spans P203–S219. A phosphoserine mark is found at S239, S297, S311, S331, S344, and S349. The segment covering T290–V299 has biased composition (polar residues). A compositionally biased stretch (low complexity) spans S300 to S315. A compositionally biased stretch (basic and acidic residues) spans D322 to D332. Residues R357–H617 form the Protein kinase domain. ATP contacts are provided by residues L362–Y371 and K385. D483 functions as the Proton acceptor in the catalytic mechanism.

The protein belongs to the protein kinase superfamily. STE Ser/Thr protein kinase family. MAP kinase kinase kinase subfamily. Interacts with PKN2; the interaction activates PKN2 kinase activity in a MAP3K2-independent kinase activity. Self-associates. Binds both upstream activators and downstream substrates in multimolecular complexes. Interacts (via the kinase catalytic domain) with STK38. Interacts with XIAP/BIRC4. Mg(2+) serves as cofactor. Autophosphorylated. In terms of processing, ubiquitination by XIAP/BIRC4 does not lead to proteasomal degradation.

The protein localises to the cytoplasm. The protein resides in the nucleus. The catalysed reaction is L-seryl-[protein] + ATP = O-phospho-L-seryl-[protein] + ADP + H(+). The enzyme catalyses L-threonyl-[protein] + ATP = O-phospho-L-threonyl-[protein] + ADP + H(+). Activated by phosphorylation on Thr-524. Its function is as follows. Component of a protein kinase signal transduction cascade. Regulates the JNK and ERK5 pathways by phosphorylating and activating MAP2K5 and MAP2K7. Plays a role in caveolae kiss-and-run dynamics. This is Mitogen-activated protein kinase kinase kinase 2 (MAP3K2) from Homo sapiens (Human).